Reading from the N-terminus, the 397-residue chain is Cystinosin (397 aa).

The N-terminal stretch at 1–24 (MDFSTHRLTTLLLLLLATVALGNA) is a signal peptide. Residues 25 to 126 (QSSQLTVDSH…FVRVTVAKSR (102 aa)) lie on the Lumenal side of the membrane. N-linked (GlcNAc...) asparagine glycosylation is found at Asn-43 and Asn-86. The chain crosses the membrane as a helical span at residues 127–147 (ALIYTSIIFGWVYFVAWSVSF). Positions 132-187 (SIIFGWVYFVAWSVSFYPQIWSNYRRKSVEGLNFDFLALNIVGFTLYSMFNCGLYF) constitute a PQ-loop 1 domain. The Cytoplasmic segment spans residues 148 to 167 (YPQIWSNYRRKSVEGLNFDF). The helical transmembrane segment at 168–188 (LALNIVGFTLYSMFNCGLYFI) threads the bilayer. The Lumenal portion of the chain corresponds to 189-210 (EDLQNEYEVRYPLGVNPVMLND). Residues 211 to 231 (VVFSLHAMFATCITILQCFFY) form a helical membrane-spanning segment. Residues 232 to 239 (QRAQQRVS) lie on the Cytoplasmic side of the membrane. The chain crosses the membrane as a helical span at residues 240 to 260 (FIAYGILAIFAVVVVVSAGLA). The Lumenal portion of the chain corresponds to 261-263 (GGS). Residues 264–284 (VIHWLDFLYYCSYVKLTITII) form a helical membrane-spanning segment. The PQ-loop 2 domain occupies 271 to 327 (LYYCSYVKLTITIIKYVPQALMNYRRKSTSGWSIGNILLDFTGGTLSMLQMILNAHN). Residues 285-302 (KYVPQALMNYRRKSTSGW) lie on the Cytoplasmic side of the membrane. Residues 303-323 (SIGNILLDFTGGTLSMLQMIL) form a helical membrane-spanning segment. The Lumenal segment spans residues 324-340 (NAHNYDDWVSIFGDPTK). Residues 341–361 (FGLGLFSVLFDVFFMLQHYVF) form a helical membrane-spanning segment. Residues 362–397 (YRHSRESSSSDLTTVTDVQNRTNESPPPSEVTTEKY) are Cytoplasmic-facing. Positions 373 to 385 (LTTVTDVQNRTNE) are enriched in polar residues. Residues 373-397 (LTTVTDVQNRTNESPPPSEVTTEKY) are disordered.

The protein belongs to the cystinosin family.

It is found in the lysosome membrane. The enzyme catalyses L-cystine(out) + H(+)(out) = L-cystine(in) + H(+)(in). Cystine/H(+) symporter that mediates export of cystine, the oxidized dimer of cysteine, from lysosomes. Involved in cysteine homeostasis during periods of fasting, which indirectly regulates mTORC1-mediated signaling by supporting de novo CoA synthesis, the TCA cycle and amino acid metabolism during periods of food shortage. Important for maintaining autophagy, and for development and survival during periods of fasting. The polypeptide is Cystinosin (Drosophila melanogaster (Fruit fly)).